We begin with the raw amino-acid sequence, 311 residues long: Ribose-phosphate pyrophosphokinase (311 aa).

ATP contacts are provided by residues 34 to 36 and 93 to 94; these read DQE and RQ. The Mg(2+) site is built by H127 and D168. The active site involves K191. D-ribose 5-phosphate is bound by residues R193, D217, and 221-225; that span reads DSGGT.

Belongs to the ribose-phosphate pyrophosphokinase family. Class I subfamily. As to quaternary structure, homohexamer. Requires Mg(2+) as cofactor.

It is found in the cytoplasm. The catalysed reaction is D-ribose 5-phosphate + ATP = 5-phospho-alpha-D-ribose 1-diphosphate + AMP + H(+). Its pathway is metabolic intermediate biosynthesis; 5-phospho-alpha-D-ribose 1-diphosphate biosynthesis; 5-phospho-alpha-D-ribose 1-diphosphate from D-ribose 5-phosphate (route I): step 1/1. Functionally, involved in the biosynthesis of the central metabolite phospho-alpha-D-ribosyl-1-pyrophosphate (PRPP) via the transfer of pyrophosphoryl group from ATP to 1-hydroxyl of ribose-5-phosphate (Rib-5-P). This chain is Ribose-phosphate pyrophosphokinase, found in Mesorhizobium japonicum (strain LMG 29417 / CECT 9101 / MAFF 303099) (Mesorhizobium loti (strain MAFF 303099)).